The sequence spans 230 residues: Protein-L-isoaspartate O-methyltransferase 1 (230 aa).

Serine 65 is a catalytic residue.

The protein belongs to the methyltransferase superfamily. L-isoaspartyl/D-aspartyl protein methyltransferase family. Monomer. As to expression, expressed in roots, rosette leaves, stems, cauline leaves, flowers and developing seeds.

It is found in the cytoplasm. The catalysed reaction is [protein]-L-isoaspartate + S-adenosyl-L-methionine = [protein]-L-isoaspartate alpha-methyl ester + S-adenosyl-L-homocysteine. Functionally, catalyzes the methyl esterification of L-isoaspartyl residues in peptides and proteins that result from spontaneous decomposition of normal L-aspartyl and L-asparaginyl residues. It plays a role in the repair and/or degradation of damaged proteins. Contributes to seed longevity and germination vigor by limiting the abnormal accumulation of the L-isoaspartyl residues in seed proteins. This is Protein-L-isoaspartate O-methyltransferase 1 (PIMT1) from Arabidopsis thaliana (Mouse-ear cress).